Reading from the N-terminus, the 1118-residue chain is DNA mismatch repair protein MSH1, mitochondrial (1118 aa).

An ATP-binding site is contributed by 768 to 775 (GPNGGGKS).

Belongs to the DNA mismatch repair MutS family.

It localises to the mitochondrion. The protein localises to the plastid. The protein resides in the chloroplast. DNA mismatch repair protein specifically involved in maintenance of mitochondrial genome configuration by controlling specific rearranged portion. Functions by suppressing asymmetric recombination at some repeat pairs. This chain is DNA mismatch repair protein MSH1, mitochondrial (MSH1), found in Arabidopsis thaliana (Mouse-ear cress).